The chain runs to 306 residues: UDP-N-acetylenolpyruvoylglucosamine reductase (306 aa).

Residues 34–198 (VGGPADLLIT…LEVTFKLHNS (165 aa)) form the FAD-binding PCMH-type domain. The active site involves Arg177. The active-site Proton donor is the Ser227. Glu297 is a catalytic residue.

Belongs to the MurB family. FAD is required as a cofactor.

Its subcellular location is the cytoplasm. The enzyme catalyses UDP-N-acetyl-alpha-D-muramate + NADP(+) = UDP-N-acetyl-3-O-(1-carboxyvinyl)-alpha-D-glucosamine + NADPH + H(+). The protein operates within cell wall biogenesis; peptidoglycan biosynthesis. In terms of biological role, cell wall formation. This chain is UDP-N-acetylenolpyruvoylglucosamine reductase, found in Clostridium botulinum (strain ATCC 19397 / Type A).